A 331-amino-acid chain; its full sequence is Holliday junction branch migration complex subunit RuvB (331 aa).

The tract at residues 1–186 is large ATPase domain (RuvB-L); the sequence is MAKTMMQDRL…FGIVQRLEFY (186 aa). Residues Ile25, Arg26, Gly67, Lys70, Thr71, Thr72, 133-135, Arg176, Tyr186, and Arg223 contribute to the ATP site; that span reads EDF. Thr71 is a binding site for Mg(2+). The interval 187–257 is small ATPAse domain (RuvB-S); it reads NIADLTTIVS…IAGSALDMLA (71 aa). The interval 260-331 is head domain (RuvB-H); sequence RRGLDHLDRR…LTQMAIDQML (72 aa). Residues Arg296, Arg315, and Arg320 each coordinate DNA.

Belongs to the RuvB family. As to quaternary structure, homohexamer. Forms an RuvA(8)-RuvB(12)-Holliday junction (HJ) complex. HJ DNA is sandwiched between 2 RuvA tetramers; dsDNA enters through RuvA and exits via RuvB. An RuvB hexamer assembles on each DNA strand where it exits the tetramer. Each RuvB hexamer is contacted by two RuvA subunits (via domain III) on 2 adjacent RuvB subunits; this complex drives branch migration. In the full resolvosome a probable DNA-RuvA(4)-RuvB(12)-RuvC(2) complex forms which resolves the HJ.

It localises to the cytoplasm. It carries out the reaction ATP + H2O = ADP + phosphate + H(+). The RuvA-RuvB-RuvC complex processes Holliday junction (HJ) DNA during genetic recombination and DNA repair, while the RuvA-RuvB complex plays an important role in the rescue of blocked DNA replication forks via replication fork reversal (RFR). RuvA specifically binds to HJ cruciform DNA, conferring on it an open structure. The RuvB hexamer acts as an ATP-dependent pump, pulling dsDNA into and through the RuvAB complex. RuvB forms 2 homohexamers on either side of HJ DNA bound by 1 or 2 RuvA tetramers; 4 subunits per hexamer contact DNA at a time. Coordinated motions by a converter formed by DNA-disengaged RuvB subunits stimulates ATP hydrolysis and nucleotide exchange. Immobilization of the converter enables RuvB to convert the ATP-contained energy into a lever motion, pulling 2 nucleotides of DNA out of the RuvA tetramer per ATP hydrolyzed, thus driving DNA branch migration. The RuvB motors rotate together with the DNA substrate, which together with the progressing nucleotide cycle form the mechanistic basis for DNA recombination by continuous HJ branch migration. Branch migration allows RuvC to scan DNA until it finds its consensus sequence, where it cleaves and resolves cruciform DNA. This Psychrobacter cryohalolentis (strain ATCC BAA-1226 / DSM 17306 / VKM B-2378 / K5) protein is Holliday junction branch migration complex subunit RuvB.